A 522-amino-acid chain; its full sequence is Ribose import ATP-binding protein RbsA 1 (522 aa).

2 ABC transporter domains span residues 8 to 243 (LRIE…GRSI) and 249 to 496 (RERP…VSTN). 40–47 (GENGAGKS) serves as a coordination point for ATP. A disordered region spans residues 492–522 (AVSTNQYKPDKSDKPDASAGKTDQKEAPRGH). A compositionally biased stretch (basic and acidic residues) spans 499-522 (KPDKSDKPDASAGKTDQKEAPRGH).

This sequence belongs to the ABC transporter superfamily. Ribose importer (TC 3.A.1.2.1) family. The complex is composed of an ATP-binding protein (RbsA), two transmembrane proteins (RbsC) and a solute-binding protein (RbsB).

The protein resides in the cell membrane. The catalysed reaction is D-ribose(out) + ATP + H2O = D-ribose(in) + ADP + phosphate + H(+). In terms of biological role, part of the ABC transporter complex RbsABC involved in ribose import. Responsible for energy coupling to the transport system. The polypeptide is Ribose import ATP-binding protein RbsA 1 (Streptomyces avermitilis (strain ATCC 31267 / DSM 46492 / JCM 5070 / NBRC 14893 / NCIMB 12804 / NRRL 8165 / MA-4680)).